The sequence spans 81 residues: MSHAVKIYDTCIGCTQCVRACPTDVLEMVPWDGCKAGQIASAPRTEDCVGCKRCEAACPTDFLSVRVYLGSETTRSMGLAY.

4Fe-4S ferredoxin-type domains are found at residues 2–31 (SHAV…MVPW) and 39–68 (IASA…VRVY). 8 residues coordinate [4Fe-4S] cluster: cysteine 11, cysteine 14, cysteine 17, cysteine 21, cysteine 48, cysteine 51, cysteine 54, and cysteine 58.

In terms of assembly, the eukaryotic PSI reaction center is composed of at least 11 subunits. Requires [4Fe-4S] cluster as cofactor.

It localises to the plastid. Its subcellular location is the chloroplast thylakoid membrane. The catalysed reaction is reduced [plastocyanin] + hnu + oxidized [2Fe-2S]-[ferredoxin] = oxidized [plastocyanin] + reduced [2Fe-2S]-[ferredoxin]. Functionally, apoprotein for the two 4Fe-4S centers FA and FB of photosystem I (PSI); essential for photochemical activity. FB is the terminal electron acceptor of PSI, donating electrons to ferredoxin. The C-terminus interacts with PsaA/B/D and helps assemble the protein into the PSI complex. Required for binding of PsaD and PsaE to PSI. PSI is a plastocyanin/cytochrome c6-ferredoxin oxidoreductase, converting photonic excitation into a charge separation, which transfers an electron from the donor P700 chlorophyll pair to the spectroscopically characterized acceptors A0, A1, FX, FA and FB in turn. This Ostreococcus tauri protein is Photosystem I iron-sulfur center.